We begin with the raw amino-acid sequence, 221 residues long: Zingipain-2 (221 aa).

Disulfide bonds link Cys24–Cys65 and Cys58–Cys98. Residue Cys27 is part of the active site. 2 N-linked (GlcNAc...) asparagine glycosylation sites follow: Asn99 and Asn156. Cys155 and Cys206 are disulfide-bonded. His161 is a catalytic residue.

It belongs to the peptidase C1 family.

The catalysed reaction is Preferential cleavage of peptides with a proline residue at the P2 position.. In terms of biological role, cysteine proteinase with a specific activity toward peptides with a proline residue at the P2 position. The chain is Zingipain-2 from Zingiber officinale (Ginger).